Consider the following 607-residue polypeptide: Glutamyl-tRNA(Gln) amidotransferase subunit E (607 aa).

The interval 399–428 (GVPEETRGANPDGTTRFLRPRPGAARMYPE) is disordered.

The protein belongs to the GatB/GatE family. GatE subfamily. In terms of assembly, heterodimer of GatD and GatE.

It carries out the reaction L-glutamyl-tRNA(Gln) + L-glutamine + ATP + H2O = L-glutaminyl-tRNA(Gln) + L-glutamate + ADP + phosphate + H(+). Functionally, allows the formation of correctly charged Gln-tRNA(Gln) through the transamidation of misacylated Glu-tRNA(Gln) in organisms which lack glutaminyl-tRNA synthetase. The reaction takes place in the presence of glutamine and ATP through an activated gamma-phospho-Glu-tRNA(Gln). The GatDE system is specific for glutamate and does not act on aspartate. This Pyrobaculum neutrophilum (strain DSM 2338 / JCM 9278 / NBRC 100436 / V24Sta) (Thermoproteus neutrophilus) protein is Glutamyl-tRNA(Gln) amidotransferase subunit E.